A 134-amino-acid chain; its full sequence is Phosphoribosyl-AMP cyclohydrolase (134 aa).

Asp-80 serves as a coordination point for Mg(2+). Cys-81 is a Zn(2+) binding site. Residues Asp-82 and Asp-84 each coordinate Mg(2+). The Zn(2+) site is built by Cys-98 and Cys-105.

It belongs to the PRA-CH family. In terms of assembly, homodimer. Requires Mg(2+) as cofactor. Zn(2+) serves as cofactor.

It localises to the cytoplasm. It catalyses the reaction 1-(5-phospho-beta-D-ribosyl)-5'-AMP + H2O = 1-(5-phospho-beta-D-ribosyl)-5-[(5-phospho-beta-D-ribosylamino)methylideneamino]imidazole-4-carboxamide. Its pathway is amino-acid biosynthesis; L-histidine biosynthesis; L-histidine from 5-phospho-alpha-D-ribose 1-diphosphate: step 3/9. Catalyzes the hydrolysis of the adenine ring of phosphoribosyl-AMP. The polypeptide is Phosphoribosyl-AMP cyclohydrolase (Bordetella bronchiseptica (strain ATCC BAA-588 / NCTC 13252 / RB50) (Alcaligenes bronchisepticus)).